The primary structure comprises 256 residues: Acetyl-coenzyme A carboxylase carboxyl transferase subunit alpha (256 aa).

One can recognise a CoA carboxyltransferase C-terminal domain in the interval 1–236 (MTKITRIVRE…KQELLVELEQ (236 aa)).

The protein belongs to the AccA family. Acetyl-CoA carboxylase is a heterohexamer composed of biotin carboxyl carrier protein (AccB), biotin carboxylase (AccC) and two subunits each of ACCase subunit alpha (AccA) and ACCase subunit beta (AccD).

Its subcellular location is the cytoplasm. It carries out the reaction N(6)-carboxybiotinyl-L-lysyl-[protein] + acetyl-CoA = N(6)-biotinyl-L-lysyl-[protein] + malonyl-CoA. It functions in the pathway lipid metabolism; malonyl-CoA biosynthesis; malonyl-CoA from acetyl-CoA: step 1/1. Functionally, component of the acetyl coenzyme A carboxylase (ACC) complex. First, biotin carboxylase catalyzes the carboxylation of biotin on its carrier protein (BCCP) and then the CO(2) group is transferred by the carboxyltransferase to acetyl-CoA to form malonyl-CoA. The chain is Acetyl-coenzyme A carboxylase carboxyl transferase subunit alpha from Streptococcus gordonii (strain Challis / ATCC 35105 / BCRC 15272 / CH1 / DL1 / V288).